Reading from the N-terminus, the 1136-residue chain is Protein stu-1 (1136 aa).

2 HEAT repeats span residues 95–133 (TLPV…ERSV) and 167–205 (YVPT…KSDL). Disordered stretches follow at residues 524–554 (KDPH…MGAP), 567–794 (RAMA…QPQI), and 821–884 (TAGQ…LLDS). Positions 595–622 (VSSTSQASVASASTASAVPAPTKSAFGA) are enriched in low complexity. The segment covering 659-668 (PAEPASPPSK) has biased composition (pro residues). Polar residues predominate over residues 673–683 (TVTSPKTQTLV). Over residues 701–716 (SSESGIPIPVSGISSP) the composition is skewed to low complexity. 2 stretches are compositionally biased toward polar residues: residues 777-793 (LPTQ…QQPQ) and 822-833 (AGQTQPQSTYTS).

This sequence belongs to the CLASP family. Interacts with microtubules.

It localises to the nucleus. The protein localises to the cytoplasm. Its subcellular location is the cytoskeleton. It is found in the spindle. In terms of biological role, microtubule binding protein that promotes the stabilization of dynamic microtubules. Required for mitotic spindle formation. This chain is Protein stu-1 (stu-1), found in Neurospora crassa (strain ATCC 24698 / 74-OR23-1A / CBS 708.71 / DSM 1257 / FGSC 987).